Reading from the N-terminus, the 104-residue chain is Small ribosomal subunit protein bS18c (104 aa).

The disordered stretch occupies residues 84–104 (DKQFERSESTPRTIGLRTRNK).

This sequence belongs to the bacterial ribosomal protein bS18 family. As to quaternary structure, part of the 30S ribosomal subunit.

The protein localises to the plastid. The protein resides in the chloroplast. This is Small ribosomal subunit protein bS18c from Cucumis sativus (Cucumber).